A 293-amino-acid polypeptide reads, in one-letter code: MILPKQYCCTHSPSCQCTKGHLNEDVLLLVFQHLNWNPKLVATLSCVCRWFDDFAKRVLWKEFCKTRAPKMMLDLQSSGSHCIDGNWRALGKLLIYCSGCTQGGLFNSSVQIPGHFVYRTRFSRTLGRSLLPPQCRTDVLYVCDPCEHLDQGEEGDVGLFRGIFKSFPTSKVRKVIINKAVPFHPSEVCPYCKAKLWSMLQAKIIPQSACIRLEAYEDCIEYFVCLNGHLLGICTLAPLSDSEDAIPSEDNNHTEKKQDNGFPRENVLKRRNSLLGGSENGPPPQKRLTNPNQ.

One can recognise an F-box domain in the interval 16 to 68 (QCTKGHLNEDVLLLVFQHLNWNPKLVATLSCVCRWFDDFAKRVLWKEFCKTRA). Residues 245-293 (AIPSEDNNHTEKKQDNGFPRENVLKRRNSLLGGSENGPPPQKRLTNPNQ) form a disordered region. Over residues 250–259 (DNNHTEKKQD) the composition is skewed to basic and acidic residues.

In Arabidopsis thaliana (Mouse-ear cress), this protein is EID1-like F-box protein 1 (EDL1).